The primary structure comprises 383 residues: Trichodiene synthase (383 aa).

Belongs to the trichodiene synthase family.

It carries out the reaction (2E,6E)-farnesyl diphosphate = trichodiene + diphosphate. It participates in sesquiterpene biosynthesis; trichothecene biosynthesis. TS is a member of the terpene cyclase group of enzymes. It catalyzes the isomerization and cyclization of farnesyl pyro-phosphate to form trichodiene, the first cyclic intermediate in the biosynthetic pathway for trichothecenes. It serves to branch trichothecene biosynthesis from the isoprenoid pathway. The chain is Trichodiene synthase (TRI5) from Gibberella pulicaris.